A 333-amino-acid polypeptide reads, in one-letter code: HTH-type transcriptional repressor PurR (333 aa).

The 55-residue stretch at 2 to 56 (ATIKDVAKMAGVSTTTVSHVINKTRFVAKETEQQVLQAIKNLNYSPSAVARSLKV) folds into the HTH lacI-type domain. A DNA-binding region (H-T-H motif) is located at residues 4-23 (IKDVAKMAGVSTTTVSHVIN). The DNA-binding element occupies 48-56 (SAVARSLKV). Residues tyrosine 73, lysine 189, threonine 191, phenylalanine 220, and aspartate 274 each contribute to the hypoxanthine site.

Homodimer.

Its pathway is purine metabolism; purine nucleotide biosynthesis [regulation]. In terms of biological role, is the main repressor of the genes involved in the de novo synthesis of purine nucleotides, regulating purB, purC, purEK, purF, purHD, purL, purMN and guaBA expression. PurR is allosterically activated to bind its cognate DNA by binding the purine corepressors, hypoxanthine or guanine, thereby effecting transcription repression. The polypeptide is HTH-type transcriptional repressor PurR (Histophilus somni (strain 129Pt) (Haemophilus somnus)).